Here is a 133-residue protein sequence, read N- to C-terminus: MEGYNILAVLIILVGVSMGQIPGGWIDANVGDTDVKEAARFATEAQSSRSNSLYHHKLLKIHKARTQVVSGINYEVFIETGTTTCKKSEVPLEDLKRCAVPENGVKHLCQAIVWVQAWIPRTKVTKLECQNKG.

A signal peptide spans methionine 1–glycine 19. Glutamine 20 bears the Pyrrolidone carboxylic acid mark. A Secondary area of contact motif is present at residues glutamine 67–glycine 71. Intrachain disulfides connect cysteine 85–cysteine 98 and cysteine 109–cysteine 129.

This sequence belongs to the cystatin family. Expressed in hemocytes and slightly in heart.

It localises to the cytoplasmic granule. Tight-binding inhibitor for papain. It has an important role in the protection of cells, antimicrobial activity against Gram-negative bacteria, defense against invading microbes, and response to external stimuli. The sequence is that of L-cystatin from Tachypleus tridentatus (Japanese horseshoe crab).